Reading from the N-terminus, the 908-residue chain is Zinc finger CCCH domain-containing protein 41 (908 aa).

The segment covering 1-13 (MELSVSSPKQSVL) has biased composition (polar residues). Residues 1 to 124 (MELSVSSPKQ…GRGNYGSWAQ (124 aa)) are disordered. Positions 20–34 (SDPEEEHEISEEEDD) are enriched in acidic residues. Composition is skewed to polar residues over residues 48 to 59 (SQSLEQDSSDQA) and 90 to 105 (GQRV…SNPM). Residues 200–228 (GIPRQRCRDFEERGFCLRGDMCPMEHGMN) form a C3H1-type zinc finger. The segment at 333–375 (NVAPLDDSNQDAAENGCGIRDSRSTSQSVWGRMKGSNSQANSK) is disordered. Residues 356-373 (STSQSVWGRMKGSNSQAN) are compositionally biased toward polar residues. The RRM domain maps to 438–510 (RTLFVNYVPH…RFIKLWWANR (73 aa)). Disordered regions lie at residues 558 to 590 (PTFQ…LQQK), 629 to 695 (VVKR…KQRP), and 807 to 908 (RESN…QIHQ). The span at 559–588 (TFQTGGAPSSSEQPKPVVVTTSGPKVTPLQ) shows a compositional bias: polar residues. Residues 587–630 (LQQKKADTLERLKETLRKKQEMLEQKRNEYRKKLATLEKQGTVV) are a coiled coil. The segment covering 630–647 (VKREEADEPDAKRVKLDT) has biased composition (basic and acidic residues). Residue S657 is modified to Phosphoserine. Over residues 677–688 (AKLSTETPSPDS) the composition is skewed to polar residues. Positions 807-828 (RESNNNNNNSNSLSVSRDNLSS) are enriched in low complexity. Over residues 846–863 (KTSSTEEPENTNVSGDND) the composition is skewed to polar residues. The span at 865-886 (TLDKQETKESDNDNNKSNHESI) shows a compositional bias: basic and acidic residues. The segment covering 898–908 (TDEEQSEQIHQ) has biased composition (acidic residues).

The chain is Zinc finger CCCH domain-containing protein 41 from Arabidopsis thaliana (Mouse-ear cress).